Here is a 71-residue protein sequence, read N- to C-terminus: UPF0346 protein Sez_1447 (71 aa).

The protein belongs to the UPF0346 family.

This is UPF0346 protein Sez_1447 from Streptococcus equi subsp. zooepidemicus (strain MGCS10565).